We begin with the raw amino-acid sequence, 363 residues long: Small ribosomal subunit biogenesis GTPase RsgA (363 aa).

Residues 112 to 268 form the CP-type G domain; that stretch reads HQQVIAANID…LIDTPGMREL (157 aa). Residues 157 to 160 and 210 to 218 each bind GTP; these read TKAD and GSSGAGKST. Zn(2+)-binding residues include Cys-291, Cys-296, His-298, and Cys-304. The tract at residues 340–363 is disordered; sequence RVAQNNRGKGSGKRPASVDRPGRR.

Belongs to the TRAFAC class YlqF/YawG GTPase family. RsgA subfamily. In terms of assembly, monomer. Associates with 30S ribosomal subunit, binds 16S rRNA. Zn(2+) serves as cofactor.

Its subcellular location is the cytoplasm. Its function is as follows. One of several proteins that assist in the late maturation steps of the functional core of the 30S ribosomal subunit. Helps release RbfA from mature subunits. May play a role in the assembly of ribosomal proteins into the subunit. Circularly permuted GTPase that catalyzes slow GTP hydrolysis, GTPase activity is stimulated by the 30S ribosomal subunit. In Xanthomonas campestris pv. campestris (strain 8004), this protein is Small ribosomal subunit biogenesis GTPase RsgA.